The following is a 450-amino-acid chain: Zinc finger protein 446 (450 aa).

The region spanning 26 to 108 (RLRFRGFCYQ…ALVEGLQHDP (83 aa)) is the SCAN box domain. A Glycyl lysine isopeptide (Lys-Gly) (interchain with G-Cter in SUMO2) cross-link involves residue Lys-130. Disordered stretches follow at residues 130–155 (KTEE…QDTR) and 168–205 (EEPN…SFHP). Ser-137 carries the phosphoserine modification. In terms of domain architecture, KRAB spans 208 to 254 (IQEEWGLLDRSQKELYWDAMLEKYGTVVSLGLPPHQPEAQAQSELGM). At Ser-218 the chain carries Phosphoserine. Disordered stretches follow at residues 263–331 (RSLR…PRKP) and 354–389 (HTSG…RRSL). Pro residues predominate over residues 275–286 (PGCPEAQPPQGP). Over residues 287 to 306 (GPAAWEGLSGAATPAPTVRP) the composition is skewed to low complexity. Thr-308 is subject to Phosphothreonine. Lys-330 participates in a covalent cross-link: Glycyl lysine isopeptide (Lys-Gly) (interchain with G-Cter in SUMO2). C2H2-type zinc fingers lie at residues 332-359 (YTCE…SGPG), 395-422 (YPCE…GQRR), and 423-450 (HFCS…PEVP).

This sequence belongs to the krueppel C2H2-type zinc-finger protein family.

The protein localises to the nucleus. Its function is as follows. May be involved in transcriptional regulation. This Homo sapiens (Human) protein is Zinc finger protein 446 (ZNF446).